The sequence spans 419 residues: S-adenosylmethionine synthase (419 aa).

Residue histidine 15 coordinates ATP. Position 17 (aspartate 17) interacts with Mg(2+). Glutamate 43 is a binding site for K(+). L-methionine is bound by residues glutamate 56 and glutamine 100. Residues 100–110 (QSPDIAQGVDE) form a flexible loop region. Residues 171–173 (DGK), 248–249 (KF), aspartate 257, 263–264 (RK), alanine 280, and lysine 284 contribute to the ATP site. Position 257 (aspartate 257) interacts with L-methionine. Lysine 288 contacts L-methionine.

It belongs to the AdoMet synthase family. Homotetramer; dimer of dimers. Requires Mg(2+) as cofactor. It depends on K(+) as a cofactor.

It localises to the cytoplasm. It carries out the reaction L-methionine + ATP + H2O = S-adenosyl-L-methionine + phosphate + diphosphate. It participates in amino-acid biosynthesis; S-adenosyl-L-methionine biosynthesis; S-adenosyl-L-methionine from L-methionine: step 1/1. In terms of biological role, catalyzes the formation of S-adenosylmethionine (AdoMet) from methionine and ATP. The overall synthetic reaction is composed of two sequential steps, AdoMet formation and the subsequent tripolyphosphate hydrolysis which occurs prior to release of AdoMet from the enzyme. The sequence is that of S-adenosylmethionine synthase from Synechococcus sp. (strain WH7803).